A 414-amino-acid chain; its full sequence is Alanine--glyoxylate aminotransferase (414 aa).

A mitochondrion-targeting transit peptide spans 1-23 (MFRMLAKASVTLGSRAASWVRNM). K231 is modified (N6-(pyridoxal phosphate)lysine). K247 bears the N6-acetyllysine; alternate mark. K247 is modified (N6-succinyllysine; alternate). 2 positions are modified to N6-acetyllysine: K256 and K334. Residue R382 participates in substrate binding. Residues 412 to 414 (NKL) carry the Microbody targeting signal motif.

The protein belongs to the class-V pyridoxal-phosphate-dependent aminotransferase family. As to quaternary structure, homodimer. Requires pyridoxal 5'-phosphate as cofactor.

The protein resides in the peroxisome. It is found in the mitochondrion matrix. It carries out the reaction L-serine + pyruvate = 3-hydroxypyruvate + L-alanine. The catalysed reaction is glyoxylate + L-alanine = glycine + pyruvate. Catalyzes the transamination of glyoxylate to glycine and contributes to the glyoxylate detoxification. Functionally, catalyzes the transamination between L-serine and pyruvate and weakly contributes to gluconeogenesis from the L-serine metabolism. The protein is Alanine--glyoxylate aminotransferase of Rattus norvegicus (Rat).